We begin with the raw amino-acid sequence, 96 residues long: Putative defensin-like protein 236 (96 aa).

The signal sequence occupies residues 1–23 (MKNATSLIIYCFLMFLLMNNVKG). Intrachain disulfides connect C31–C93, C41–C70, C49–C83, and C68–C85.

It belongs to the DEFL family.

Its subcellular location is the secreted. The protein is Putative defensin-like protein 236 (SCRL20) of Arabidopsis thaliana (Mouse-ear cress).